We begin with the raw amino-acid sequence, 145 residues long: Large ribosomal subunit protein uL11 (145 aa).

It belongs to the universal ribosomal protein uL11 family. Part of the ribosomal stalk of the 50S ribosomal subunit. Interacts with L10 and the large rRNA to form the base of the stalk. L10 forms an elongated spine to which L12 dimers bind in a sequential fashion forming a multimeric L10(L12)X complex. One or more lysine residues are methylated.

Its function is as follows. Forms part of the ribosomal stalk which helps the ribosome interact with GTP-bound translation factors. The polypeptide is Large ribosomal subunit protein uL11 (Porphyromonas gingivalis (strain ATCC 33277 / DSM 20709 / CIP 103683 / JCM 12257 / NCTC 11834 / 2561)).